Here is a 196-residue protein sequence, read N- to C-terminus: Imidazoleglycerol-phosphate dehydratase (196 aa).

The protein belongs to the imidazoleglycerol-phosphate dehydratase family.

The protein resides in the cytoplasm. It catalyses the reaction D-erythro-1-(imidazol-4-yl)glycerol 3-phosphate = 3-(imidazol-4-yl)-2-oxopropyl phosphate + H2O. Its pathway is amino-acid biosynthesis; L-histidine biosynthesis; L-histidine from 5-phospho-alpha-D-ribose 1-diphosphate: step 6/9. The sequence is that of Imidazoleglycerol-phosphate dehydratase from Nitratidesulfovibrio vulgaris (strain DSM 19637 / Miyazaki F) (Desulfovibrio vulgaris).